The following is a 214-amino-acid chain: tRNA (guanine-N(7)-)-methyltransferase (214 aa).

S-adenosyl-L-methionine-binding residues include E43, E68, D95, and D117. The active site involves D117. Substrate-binding positions include K121, D153, and 190–193; that span reads TEYE.

The protein belongs to the class I-like SAM-binding methyltransferase superfamily. TrmB family.

It carries out the reaction guanosine(46) in tRNA + S-adenosyl-L-methionine = N(7)-methylguanosine(46) in tRNA + S-adenosyl-L-homocysteine. The protein operates within tRNA modification; N(7)-methylguanine-tRNA biosynthesis. Its function is as follows. Catalyzes the formation of N(7)-methylguanine at position 46 (m7G46) in tRNA. This is tRNA (guanine-N(7)-)-methyltransferase from Staphylococcus aureus (strain USA300).